The following is a 133-amino-acid chain: Agouti-signaling protein (133 aa).

A signal peptide spans 1 to 22 (MDVSRLLLATLLVCLCFLTAYS). Residue Asn39 is glycosylated (N-linked (GlcNAc...) asparagine). A disordered region spans residues 56–95 (NKKSKKISRNEAEKKKRPSKRKAPMKNVARTRPPPPTPCV). Residues 70 to 79 (KKRPSKRKAP) show a composition bias toward basic residues. 5 disulfide bridges follow: Cys94-Cys109, Cys101-Cys115, Cys108-Cys126, Cys112-Cys133, and Cys117-Cys124. The Agouti domain maps to 94 to 133 (CVATRDSCKPPAPACCDPCAFCQCRFFRSACSCRVLNPTC).

Its subcellular location is the secreted. Its function is as follows. Involved in the regulation of melanogenesis. The binding of ASP to MC1R precludes alpha-MSH initiated signaling and thus blocks production of cAMP, leading to a down-regulation of eumelanogenesis (brown/black pigment) and thus increasing synthesis of pheomelanin (yellow/red pigment). In Bos taurus (Bovine), this protein is Agouti-signaling protein (ASIP).